The primary structure comprises 264 residues: Small ribosomal subunit protein uS3 (264 aa).

The 69-residue stretch at 39 to 107 (VRDFLKKKLK…PVHVNIEEIR (69 aa)) folds into the KH type-2 domain. A disordered region spans residues 211–264 (NDAPVVEEPQDDRRRRPGRPEGRRREGEGRPGGNRRGGAGAGRRAAPGDAKSGE). A compositionally biased stretch (basic and acidic residues) spans 221–239 (DDRRRRPGRPEGRRREGEG). The span at 240–251 (RPGGNRRGGAGA) shows a compositional bias: gly residues.

The protein belongs to the universal ribosomal protein uS3 family. In terms of assembly, part of the 30S ribosomal subunit. Forms a tight complex with proteins S10 and S14.

Functionally, binds the lower part of the 30S subunit head. Binds mRNA in the 70S ribosome, positioning it for translation. In Cupriavidus pinatubonensis (strain JMP 134 / LMG 1197) (Cupriavidus necator (strain JMP 134)), this protein is Small ribosomal subunit protein uS3.